A 411-amino-acid polypeptide reads, in one-letter code: Arginine deiminase (411 aa).

The Amidino-cysteine intermediate role is filled by Cys401.

The protein belongs to the arginine deiminase family.

Its subcellular location is the cytoplasm. It catalyses the reaction L-arginine + H2O = L-citrulline + NH4(+). The protein operates within amino-acid degradation; L-arginine degradation via ADI pathway; carbamoyl phosphate from L-arginine: step 1/2. The polypeptide is Arginine deiminase (Streptococcus equi subsp. zooepidemicus (strain H70)).